The sequence spans 72 residues: Translation initiation factor IF-1 (72 aa).

Positions 1-72 (MTKEDSFEMH…SKGRIIFRSR (72 aa)) constitute an S1-like domain.

It belongs to the IF-1 family. As to quaternary structure, component of the 30S ribosomal translation pre-initiation complex which assembles on the 30S ribosome in the order IF-2 and IF-3, IF-1 and N-formylmethionyl-tRNA(fMet); mRNA recruitment can occur at any time during PIC assembly.

The protein resides in the cytoplasm. Functionally, one of the essential components for the initiation of protein synthesis. Stabilizes the binding of IF-2 and IF-3 on the 30S subunit to which N-formylmethionyl-tRNA(fMet) subsequently binds. Helps modulate mRNA selection, yielding the 30S pre-initiation complex (PIC). Upon addition of the 50S ribosomal subunit IF-1, IF-2 and IF-3 are released leaving the mature 70S translation initiation complex. The chain is Translation initiation factor IF-1 from Blochmanniella pennsylvanica (strain BPEN).